Here is a 324-residue protein sequence, read N- to C-terminus: Lipoyl synthase (324 aa).

Positions 65, 70, 76, 91, 95, 98, and 302 each coordinate [4Fe-4S] cluster. The Radical SAM core domain occupies Trp77–Ala291.

This sequence belongs to the radical SAM superfamily. Lipoyl synthase family. Requires [4Fe-4S] cluster as cofactor.

The protein resides in the cytoplasm. It carries out the reaction [[Fe-S] cluster scaffold protein carrying a second [4Fe-4S](2+) cluster] + N(6)-octanoyl-L-lysyl-[protein] + 2 oxidized [2Fe-2S]-[ferredoxin] + 2 S-adenosyl-L-methionine + 4 H(+) = [[Fe-S] cluster scaffold protein] + N(6)-[(R)-dihydrolipoyl]-L-lysyl-[protein] + 4 Fe(3+) + 2 hydrogen sulfide + 2 5'-deoxyadenosine + 2 L-methionine + 2 reduced [2Fe-2S]-[ferredoxin]. It functions in the pathway protein modification; protein lipoylation via endogenous pathway; protein N(6)-(lipoyl)lysine from octanoyl-[acyl-carrier-protein]: step 2/2. Its function is as follows. Catalyzes the radical-mediated insertion of two sulfur atoms into the C-6 and C-8 positions of the octanoyl moiety bound to the lipoyl domains of lipoate-dependent enzymes, thereby converting the octanoylated domains into lipoylated derivatives. The sequence is that of Lipoyl synthase from Mycobacterium ulcerans (strain Agy99).